A 100-amino-acid polypeptide reads, in one-letter code: Large ribosomal subunit protein bL28 (100 aa).

The protein belongs to the bacterial ribosomal protein bL28 family.

The sequence is that of Large ribosomal subunit protein bL28 from Gluconacetobacter diazotrophicus (strain ATCC 49037 / DSM 5601 / CCUG 37298 / CIP 103539 / LMG 7603 / PAl5).